The following is a 305-amino-acid chain: Large ribosomal subunit protein uL3c (305 aa).

The transit peptide at 1–84 (MAAILPTFSI…AVGGLEIKMM (84 aa)) directs the protein to the chloroplast. The interval 228 to 256 (SHRALGSIGAGTTPGHVYKGKKMPGRMGG) is disordered.

As to quaternary structure, component of the chloroplast large ribosomal subunit (LSU). Mature 70S chloroplast ribosomes of higher plants consist of a small (30S) and a large (50S) subunit. The 30S small subunit contains 1 molecule of ribosomal RNA (16S rRNA) and 24 different proteins. The 50S large subunit contains 3 rRNA molecules (23S, 5S and 4.5S rRNA) and 33 different proteins.

The protein resides in the plastid. Its subcellular location is the chloroplast. Functionally, component of the chloroplast ribosome (chloro-ribosome), a dedicated translation machinery responsible for the synthesis of chloroplast genome-encoded proteins, including proteins of the transcription and translation machinery and components of the photosynthetic apparatus. The polypeptide is Large ribosomal subunit protein uL3c (RPL3) (Spinacia oleracea (Spinach)).